The sequence spans 198 residues: Large ribosomal subunit protein bL12m (198 aa).

The transit peptide at 1-36 (MLPSATSLLRGPCLGLRAAALRLVRQQVPHVCAVRL) directs the protein to the mitochondrion. A compositionally biased stretch (low complexity) spans 106–115 (GAAPAPTAPE). A disordered region spans residues 106–126 (GAAPAPTAPEAAEEDVPKQKE). An N6-acetyllysine mark is found at Lys125, Lys138, Lys142, and Lys144. Residue Lys150 is modified to N6-acetyllysine; alternate. Residue Lys150 is modified to N6-succinyllysine; alternate. A Glycyl lysine isopeptide (Lys-Gly) (interchain with G-Cter in ubiquitin) cross-link involves residue Lys150. Lys162 is modified (N6-succinyllysine). Residues Lys163 and Lys173 each carry the N6-acetyllysine modification. Residue Lys178 is modified to N6-acetyllysine; alternate. Lys178 carries the post-translational modification N6-succinyllysine; alternate. Lys185 carries the post-translational modification N6-acetyllysine.

The protein belongs to the bacterial ribosomal protein bL12 family. Component of the mitochondrial ribosome large subunit (39S) which comprises a 16S rRNA and about 50 distinct proteins. Interacts with NOA1. Post-translationally, two mature forms are produced by differential two-step proteolytic cleavage. Cleaved by the mitochondrial processing protease to produce the long mature form and subsequently by the mitochondrial intermediate protease to produce the short mature form. In terms of processing, in the presence of CUL3, undergoes 'Lys-63'-linked ubiquitination at Lys-150 which results in proteasomal degradation.

The protein resides in the mitochondrion matrix. Functionally, as a component of the mitochondrial large ribosomal subunit, plays a role in mitochondrial translation. When present in mitochondria as a free protein not associated with the ribosome, associates with mitochondrial RNA polymerase POLRMT to activate transcription. Required for POLRMT stability. This Bos taurus (Bovine) protein is Large ribosomal subunit protein bL12m (MRPL12).